A 133-amino-acid polypeptide reads, in one-letter code: Small ribosomal subunit protein bS6 (133 aa).

It belongs to the bacterial ribosomal protein bS6 family.

Its function is as follows. Binds together with bS18 to 16S ribosomal RNA. The sequence is that of Small ribosomal subunit protein bS6 from Chlorobium limicola (strain DSM 245 / NBRC 103803 / 6330).